A 237-amino-acid polypeptide reads, in one-letter code: Trypsin-1 (237 aa).

A Peptidase S1 domain is found at 1-237 (IVGGTDAVLG…HVDWIKANAV (237 aa)). A disulfide bridge connects residues C30 and C46. The active-site Charge relay system is the H45. 3 residues coordinate Ca(2+): E64, V69, and E74. Catalysis depends on D96, which acts as the Charge relay system. Disulfide bonds link C159-C174 and C185-C213. The Charge relay system role is filled by S189.

The protein belongs to the peptidase S1 family. Ca(2+) serves as cofactor.

It is found in the secreted. The protein localises to the extracellular space. It catalyses the reaction Preferential cleavage: Arg-|-Xaa, Lys-|-Xaa.. This chain is Trypsin-1, found in Astacus astacus (Noble crayfish).